The following is a 92-amino-acid chain: uncharacterized protein (92 aa).

Belongs to the IUNH family.

This is an uncharacterized protein from Corynebacterium ammoniagenes (Brevibacterium ammoniagenes).